A 99-amino-acid polypeptide reads, in one-letter code: UPF0386 protein mll0189 (99 aa).

Belongs to the UPF0386 family.

The protein is UPF0386 protein mll0189 of Mesorhizobium japonicum (strain LMG 29417 / CECT 9101 / MAFF 303099) (Mesorhizobium loti (strain MAFF 303099)).